Consider the following 576-residue polypeptide: N-acetylmuramoyl-L-alanine amidase (576 aa).

An N-terminal signal peptide occupies residues 1–21 (MAQGVLWILLGLLLWSDPGTA). Residue N77 is glycosylated (N-linked (GlcNAc...) asparagine). At S239 the chain carries Phosphoserine. Deamidated asparagine occurs at positions 274 and 322. A glycan (N-linked (GlcNAc...) asparagine) is linked at N367. The N-acetylmuramoyl-L-alanine amidase domain occupies 406–532 (FLYVHHTYVP…RQLVRTDCPG (127 aa)). H410 lines the Zn(2+) pocket. Residues C419 and C425 are joined by a disulfide bond. N485 carries an N-linked (GlcNAc...) asparagine glycan. The Zn(2+) site is built by H522 and C530. The segment at 550–576 (KPRPARSVSKRSRREPPPRTLPATDLQ) is disordered.

The protein belongs to the N-acetylmuramoyl-L-alanine amidase 2 family. The cofactor is Zn(2+). In terms of tissue distribution, strongly expressed in liver and fetal liver, and secreted into serum. Expressed to a much lesser extent in transverse colon, lymph nodes, heart, thymus, pancreas, descending colon, stomach and testis. Isoform 2 is not detected in the liver or serum.

The protein localises to the secreted. It localises to the membrane. The catalysed reaction is Hydrolyzes the link between N-acetylmuramoyl residues and L-amino acid residues in certain cell-wall glycopeptides.. In terms of biological role, may play a scavenger role by digesting biologically active peptidoglycan (PGN) into biologically inactive fragments. Has no direct bacteriolytic activity. This Homo sapiens (Human) protein is N-acetylmuramoyl-L-alanine amidase (PGLYRP2).